The primary structure comprises 287 residues: TLNLIPGMSKIQIRDLPEGVLFGNLESLFSQMLHNMGRMLPRAAAVLMNSFEELDPTIVSDLNSKFNNILCIGPFNLVSPPPPVPDTYGCMAWLDKQKPASVAYISFGSVATPPPHELVALAEALEASKVPFLWSLKDHSKVHLPNGFLDRTKSHGIVLSWAPQVEILEHAALGVFVTHCGWNSILESIVGGVPMICRPFFGDQRLNGRMVEDVWEIGLLMDGGVLTKNGAIDGLNQILLQGKGKKMRENIKRLKELAKGATEPKGSSSKSFTELANLVRSRGSYEN.

Residues Ala-162, Gln-164, His-179, Trp-182, Asn-183, Ser-184, and Glu-187 each contribute to the UDP-alpha-D-glucose site. Gly-202 provides a ligand contact to an anthocyanidin. UDP-alpha-D-glucose-binding residues include Asp-203 and Gln-204.

It belongs to the UDP-glycosyltransferase family. Expressed in cotyledons, hypocotyls, roots and leaves.

The enzyme catalyses an anthocyanidin + UDP-alpha-D-glucose + H(+) = an anthocyanidin 3-O-beta-D-glucoside + UDP. The protein operates within pigment biosynthesis; anthocyanin biosynthesis. Functionally, in the presence of other necessary color factors, this glycosylation reaction allows the accumulation of anthocyanin pigments. The protein is Anthocyanidin 3-O-glucosyltransferase 7 (GT7) of Manihot esculenta (Cassava).